The chain runs to 102 residues: Auxin-responsive protein SAUR68 (102 aa).

This sequence belongs to the ARG7 family.

The protein localises to the cell membrane. Functionally, may promote auxin-stimulated organ elongation, such as hypocotyls, stamen filaments and petals. The sequence is that of Auxin-responsive protein SAUR68 from Arabidopsis thaliana (Mouse-ear cress).